The primary structure comprises 399 residues: S-adenosylmethionine synthase (399 aa).

136 to 141 (GTGSAD) lines the ATP pocket.

This sequence belongs to the AdoMet synthase 2 family. Requires Mg(2+) as cofactor.

It catalyses the reaction L-methionine + ATP + H2O = S-adenosyl-L-methionine + phosphate + diphosphate. Its pathway is amino-acid biosynthesis; S-adenosyl-L-methionine biosynthesis; S-adenosyl-L-methionine from L-methionine: step 1/1. Catalyzes the formation of S-adenosylmethionine from methionine and ATP. The protein is S-adenosylmethionine synthase of Methanothrix thermoacetophila (strain DSM 6194 / JCM 14653 / NBRC 101360 / PT) (Methanosaeta thermophila).